The chain runs to 191 residues: MKTLLRPAVSLFVLLTAVTGVVYPLAVTGIAKVTFPEAADGSLIVKDGKTVGSSLIGQNFSDPKYFWGRPSATSPMPYNASSSSGSNQGPLNPALVDAVKVRIEALKAADPDNKLPIPADLVNASASGLDPHISPEAAAYQVTRVAGQRHLLPADVKALVSQHTEGRQWGVFGEPRVNVLQLNIALDSVSK.

The chain crosses the membrane as a helical span at residues 11–31 (LFVLLTAVTGVVYPLAVTGIA).

This sequence belongs to the KdpC family. As to quaternary structure, the system is composed of three essential subunits: KdpA, KdpB and KdpC.

The protein localises to the cell inner membrane. Part of the high-affinity ATP-driven potassium transport (or Kdp) system, which catalyzes the hydrolysis of ATP coupled with the electrogenic transport of potassium into the cytoplasm. This subunit acts as a catalytic chaperone that increases the ATP-binding affinity of the ATP-hydrolyzing subunit KdpB by the formation of a transient KdpB/KdpC/ATP ternary complex. The sequence is that of Potassium-transporting ATPase KdpC subunit from Dechloromonas aromatica (strain RCB).